A 382-amino-acid polypeptide reads, in one-letter code: MPVEVKSSQSSGGDVRPGERDQALNLVLGQIERNFGKGSIMRLGDASRMRVETISTGALTLDLALGGGYPKGRVVEVYGPESSGKTTLTLHAIAEVQRRGGVAAFVDAEHALDPVYAASLGVDIENLLVSQPDTGEMALEIVDQLVRSAAVDIVVVDSVAALTPRAEIEGEMGDLAVGSQARLMSQAMRKITGNIGKSGCTVIFLNQLRLKIGVTYGNPETTTGGNALKFYASVRLDIRRIQTLKRGTEEYGIRAKVKVAKNKVAPPFRIAEFDILFGRGISTLGCLLDLAEETGVVTRKGAWYSYEGDNIGQGRDNTIGWLEQNPEAKDTIETLVRQKLTEGSEVTSNSMRPLAAAARSAATKSAAKGSEVQADVKTKGAA.

Position 79-86 (79-86) interacts with ATP; it reads GPESSGKT. Residues 362–382 form a disordered region; sequence ATKSAAKGSEVQADVKTKGAA.

The protein belongs to the RecA family.

It is found in the cytoplasm. In terms of biological role, can catalyze the hydrolysis of ATP in the presence of single-stranded DNA, the ATP-dependent uptake of single-stranded DNA by duplex DNA, and the ATP-dependent hybridization of homologous single-stranded DNAs. It interacts with LexA causing its activation and leading to its autocatalytic cleavage. In Synechococcus sp. (strain WH7803), this protein is Protein RecA.